Here is a 414-residue protein sequence, read N- to C-terminus: Carbohydrate sulfotransferase 12 (414 aa).

At 1-5 (MTKAR) the chain is on the cytoplasmic side. A helical; Signal-anchor for type II membrane protein transmembrane segment spans residues 6-26 (LFRLWLVLGSVFMILLIIVYW). At 27–414 (DSAGAAHFYL…YPKPENLLRD (388 aa)) the chain is on the lumenal side. A disordered region spans residues 80 to 125 (QSDLPRKETEQPPAPGSMEESVRGYDWSPRDARRSPDQGRQQAERR). Residues 99–125 (ESVRGYDWSPRDARRSPDQGRQQAERR) are compositionally biased toward basic and acidic residues. Asparagine 134 is a glycosylation site (N-linked (GlcNAc...) asparagine). Position 171-177 (171-177 (PKVACTN)) interacts with 3'-phosphoadenylyl sulfate. Residue asparagine 209 is glycosylated (N-linked (GlcNAc...) asparagine). 245 to 253 (RDPFVRLIS) provides a ligand contact to 3'-phosphoadenylyl sulfate. N-linked (GlcNAc...) asparagine glycosylation is found at asparagine 280 and asparagine 370.

The protein belongs to the sulfotransferase 2 family. As to expression, widely expressed. Expressed a high level in spinal chord, heart, spleen, thyroid, pituitary gland, adrenal gland, peripheral blood leukocytes, thymus, lung, small intestine, fetal kidney, fetal spleen and fetal lung.

The protein localises to the golgi apparatus membrane. The catalysed reaction is chondroitin beta-D-glucuronate + n 3'-phosphoadenylyl sulfate = chondroitin 4'-sulfate + n adenosine 3',5'-bisphosphate + n H(+). In terms of biological role, catalyzes the transfer of sulfate to position 4 of the N-acetylgalactosamine (GalNAc) residue of chondroitin and desulfated dermatan sulfate. Chondroitin sulfate constitutes the predominant proteoglycan present in cartilage and is distributed on the surfaces of many cells and extracellular matrices. Activity toward partially desulfated dermatan sulfate is however lower. Does not form 4, 6-di-O-sulfated GalNAc when chondroitin sulfate C is used as an acceptor. The sequence is that of Carbohydrate sulfotransferase 12 (CHST12) from Homo sapiens (Human).